A 432-amino-acid polypeptide reads, in one-letter code: Enolase (432 aa).

Glutamine 163 provides a ligand contact to (2R)-2-phosphoglycerate. Residue glutamate 205 is the Proton donor of the active site. Residues aspartate 242, glutamate 289, and aspartate 316 each coordinate Mg(2+). 4 residues coordinate (2R)-2-phosphoglycerate: lysine 341, arginine 370, serine 371, and lysine 392. The active-site Proton acceptor is the lysine 341.

The protein belongs to the enolase family. Requires Mg(2+) as cofactor. Probably phosphorylated.

The protein localises to the cytoplasm. It is found in the secreted. It localises to the cell surface. It catalyses the reaction (2R)-2-phosphoglycerate = phosphoenolpyruvate + H2O. It functions in the pathway carbohydrate degradation; glycolysis; pyruvate from D-glyceraldehyde 3-phosphate: step 4/5. Catalyzes the reversible conversion of 2-phosphoglycerate (2-PG) into phosphoenolpyruvate (PEP). It is essential for the degradation of carbohydrates via glycolysis. In terms of biological role, 'Moonlights' as a plasminogen receptor. Binds plasminogen and human salivary mucin MG2 when expressed on the bacterial cell surface, potentially allowing the bacterium to acquire surface-associated proteolytic activity that may help the dissemination through oral tissues and entrance into the blood stream. The sequence is that of Enolase from Streptococcus mutans serotype c (strain ATCC 700610 / UA159).